Consider the following 238-residue polypeptide: Ribonuclease PH (238 aa).

Phosphate is bound by residues Arg86 and 124–126 (GTR).

The protein belongs to the RNase PH family. In terms of assembly, homohexameric ring arranged as a trimer of dimers.

The catalysed reaction is tRNA(n+1) + phosphate = tRNA(n) + a ribonucleoside 5'-diphosphate. In terms of biological role, phosphorolytic 3'-5' exoribonuclease that plays an important role in tRNA 3'-end maturation. Removes nucleotide residues following the 3'-CCA terminus of tRNAs; can also add nucleotides to the ends of RNA molecules by using nucleoside diphosphates as substrates, but this may not be physiologically important. Probably plays a role in initiation of 16S rRNA degradation (leading to ribosome degradation) during starvation. In Salmonella agona (strain SL483), this protein is Ribonuclease PH.